The primary structure comprises 101 residues: Ubiquitin-related modifier 1 (101 aa).

Position 101 is a 1-thioglycine (Gly-101). Residue Gly-101 forms a Glycyl lysine isopeptide (Gly-Lys) (interchain with K-? in acceptor proteins) linkage.

Belongs to the URM1 family. C-terminal thiocarboxylation occurs in 2 steps, it is first acyl-adenylated (-COAMP) via the hesA/moeB/thiF part of UBA4, then thiocarboxylated (-COSH) via the rhodanese domain of UBA4.

It localises to the cytoplasm. Its pathway is tRNA modification; 5-methoxycarbonylmethyl-2-thiouridine-tRNA biosynthesis. Its function is as follows. Acts as a sulfur carrier required for 2-thiolation of mcm(5)S(2)U at tRNA wobble positions of cytosolic tRNA(Lys), tRNA(Glu) and tRNA(Gln). Serves as sulfur donor in tRNA 2-thiolation reaction by being thiocarboxylated (-COSH) at its C-terminus by the MOCS3 homolog UBA4. The sulfur is then transferred to tRNA to form 2-thiolation of mcm(5)S(2)U. Prior mcm(5) tRNA modification by the elongator complex is required for 2-thiolation. Also acts as a ubiquitin-like protein (UBL) that is covalently conjugated via an isopeptide bond to lysine residues of target proteins such as AHP1. The thiocarboxylated form serves as substrate for conjugation and oxidative stress specifically induces the formation of UBL-protein conjugates. This Debaryomyces hansenii (strain ATCC 36239 / CBS 767 / BCRC 21394 / JCM 1990 / NBRC 0083 / IGC 2968) (Yeast) protein is Ubiquitin-related modifier 1.